A 349-amino-acid chain; its full sequence is N-acetyltaurine hydrolase (349 aa).

A divalent metal cation is bound by residues H26, H28, E169, H201, H230, and D298.

The protein belongs to the metallo-dependent hydrolases superfamily. Phosphotriesterase family. The cofactor is a divalent metal cation.

Its subcellular location is the cytoplasm. The protein localises to the cytosol. It catalyses the reaction N-acetyltaurine + H2O = taurine + acetate. The enzyme catalyses N-propanoyltaurine + H2O = propanoate + taurine. The catalysed reaction is N-acetyl-L-methionine + H2O = L-methionine + acetate. It carries out the reaction N-acetyl-L-isoleucine + H2O = L-isoleucine + acetate. It catalyses the reaction N-acetyl-L-leucine + H2O = L-leucine + acetate. The enzyme catalyses N-acetyl-L-valine + H2O = L-valine + acetate. In terms of biological role, N-acetyltaurine hydrolase that catalyzes the hydrolysis of N-acetyltaurine into taurine and acetate. PTER also acts on other N-acetyl amino acids (Met, Ile, Leu, Val) and N-propionyltaurine, but at lower rates. This Xenopus tropicalis (Western clawed frog) protein is N-acetyltaurine hydrolase (pter).